A 142-amino-acid polypeptide reads, in one-letter code: Large ribosomal subunit protein uL23 (142 aa).

Belongs to the universal ribosomal protein uL23 family. Component of the large ribosomal subunit. Mature ribosomes consist of a small (40S) and a large (60S) subunit. The 40S subunit contains about 32 different proteins and 1 molecule of RNA (18S). The 60S subunit contains 45 different proteins and 3 molecules of RNA (25S, 5.8S and 5S).

The protein localises to the cytoplasm. Its function is as follows. Component of the ribosome, a large ribonucleoprotein complex responsible for the synthesis of proteins in the cell. The small ribosomal subunit (SSU) binds messenger RNAs (mRNAs) and translates the encoded message by selecting cognate aminoacyl-transfer RNA (tRNA) molecules. The large subunit (LSU) contains the ribosomal catalytic site termed the peptidyl transferase center (PTC), which catalyzes the formation of peptide bonds, thereby polymerizing the amino acids delivered by tRNAs into a polypeptide chain. The nascent polypeptides leave the ribosome through a tunnel in the LSU and interact with protein factors that function in enzymatic processing, targeting, and the membrane insertion of nascent chains at the exit of the ribosomal tunnel. RPL25 is a major component of the universal docking site for these factors at the polypeptide exit tunnel. The sequence is that of Large ribosomal subunit protein uL23 from Candida albicans (strain SC5314 / ATCC MYA-2876) (Yeast).